A 380-amino-acid chain; its full sequence is Probable inorganic pyrophosphatase (380 aa).

Residues Asp198, Asp203, and Asp235 each contribute to the Mg(2+) site.

Belongs to the PPase family. Requires Mg(2+) as cofactor.

The catalysed reaction is diphosphate + H2O = 2 phosphate + H(+). This chain is Probable inorganic pyrophosphatase, found in Plasmodium falciparum (isolate 3D7).